The following is a 166-amino-acid chain: Endoribonuclease YbeY (166 aa).

3 residues coordinate Zn(2+): His-132, His-136, and His-142.

Belongs to the endoribonuclease YbeY family. Zn(2+) serves as cofactor.

The protein localises to the cytoplasm. Its function is as follows. Single strand-specific metallo-endoribonuclease involved in late-stage 70S ribosome quality control and in maturation of the 3' terminus of the 16S rRNA. The chain is Endoribonuclease YbeY from Clostridium botulinum (strain 657 / Type Ba4).